The sequence spans 127 residues: Aspartate 1-decarboxylase (127 aa).

Serine 25 functions as the Schiff-base intermediate with substrate; via pyruvic acid in the catalytic mechanism. Serine 25 is subject to Pyruvic acid (Ser). Threonine 57 is a binding site for substrate. The Proton donor role is filled by tyrosine 58. 73-75 (GAA) serves as a coordination point for substrate.

The protein belongs to the PanD family. In terms of assembly, heterooctamer of four alpha and four beta subunits. Requires pyruvate as cofactor. In terms of processing, is synthesized initially as an inactive proenzyme, which is activated by self-cleavage at a specific serine bond to produce a beta-subunit with a hydroxyl group at its C-terminus and an alpha-subunit with a pyruvoyl group at its N-terminus.

The protein localises to the cytoplasm. It carries out the reaction L-aspartate + H(+) = beta-alanine + CO2. It participates in cofactor biosynthesis; (R)-pantothenate biosynthesis; beta-alanine from L-aspartate: step 1/1. Catalyzes the pyruvoyl-dependent decarboxylation of aspartate to produce beta-alanine. This Bacillus velezensis (strain DSM 23117 / BGSC 10A6 / LMG 26770 / FZB42) (Bacillus amyloliquefaciens subsp. plantarum) protein is Aspartate 1-decarboxylase.